Reading from the N-terminus, the 237-residue chain is MSNFSRAVDQKTLLVAGCDTGVGKTVTTSALAAYWWKCGKDQSFGLMKLMQTGLGDDELYQQLFGHLTRWDVVTPLKFATPLAPPLAADQEGKTIDLGVVWQTLQTMQQNHDHVLVEALGSLGSPVTHELTVADIAALWRLETILVVPVQLGAMGQAIAQVALARQTKVKLKGLVLSCASPEAEGKVEDWATPAMLESFTHLPVLGIVPYLTESERENLSRLAEITARFGLEKLAYF.

Gly21–Val26 contributes to the ATP binding site. Thr25 serves as a coordination point for Mg(2+). Residue Lys48 is part of the active site. Thr52 lines the substrate pocket. ATP-binding positions include Asp56, Glu117–Gly120, Ser177–Cys178, and Pro209–Leu211. Mg(2+) is bound by residues Asp56 and Glu117.

It belongs to the dethiobiotin synthetase family. Homodimer. It depends on Mg(2+) as a cofactor.

The protein resides in the cytoplasm. The catalysed reaction is (7R,8S)-7,8-diammoniononanoate + CO2 + ATP = (4R,5S)-dethiobiotin + ADP + phosphate + 3 H(+). The enzyme catalyses (7R,8S)-8-amino-7-(carboxyamino)nonanoate + ATP = (4R,5S)-dethiobiotin + ADP + phosphate + H(+). The protein operates within cofactor biosynthesis; biotin biosynthesis; biotin from 7,8-diaminononanoate: step 1/2. Catalyzes a mechanistically unusual reaction, the ATP-dependent insertion of CO2 between the N7 and N8 nitrogen atoms of 7,8-diaminopelargonic acid (DAPA, also called 7,8-diammoniononanoate) to form a ureido ring. This cyanobacterium does not encode bioA (which catalyzes the formation of the precursor for this reaction in the cannonical pathway), instead it encodes bioU, which replaces bioA and also performs the first half of the cannonical BioD reaction. Thus in this bacteria BioD has a different substrate. In Synechocystis replacement of bioU by bioA from E.coli leads to biotin synthesis, showing BioD can use the 'cannonical' 7,8-diammoniononanoate as a substrate. The protein is ATP-dependent dethiobiotin synthetase BioD of Synechocystis sp. (strain ATCC 27184 / PCC 6803 / Kazusa).